Here is a 157-residue protein sequence, read N- to C-terminus: Succinate dehydrogenase assembly factor 2-B, mitochondrial (157 aa).

The N-terminal 24 residues, 1-24, are a transit peptide targeting the mitochondrion; the sequence is MLRQFLFSTASRRLVRPMIAPHRS.

Belongs to the SDHAF2 family. In terms of assembly, interacts with the flavoprotein subunit within the SDH catalytic dimer.

It is found in the mitochondrion matrix. In terms of biological role, plays an essential role in the assembly of succinate dehydrogenase (SDH), an enzyme complex (also referred to as respiratory complex II) that is a component of both the tricarboxylic acid (TCA) cycle and the mitochondrial electron transport chain, and which couples the oxidation of succinate to fumarate with the reduction of ubiquinone (coenzyme Q) to ubiquinol. Required for flavinylation (covalent attachment of FAD) of the flavoprotein subunit of the SDH catalytic dimer. In Drosophila persimilis (Fruit fly), this protein is Succinate dehydrogenase assembly factor 2-B, mitochondrial.